We begin with the raw amino-acid sequence, 196 residues long: uncharacterized protein (196 aa).

This is an uncharacterized protein from Aquifex aeolicus (strain VF5).